Reading from the N-terminus, the 21-residue chain is Ocellatin-4 (21 aa).

An Isoleucine amide modification is found at I21.

Expressed by the skin dorsal glands.

It localises to the secreted. In terms of biological role, has hemolytic activity against human erythrocytes (HC50=14.3 uM). Has antibacterial activity against the Gram-positive bacterium S.aureus ATCC 25923 (MIC=64 uM) and the Gram-negative bacterium E.coli ATCC 25922 (MIC=64 uM). This chain is Ocellatin-4, found in Leptodactylus ocellatus (Argus frog).